Here is a 132-residue protein sequence, read N- to C-terminus: Small ribosomal subunit protein uS8 (132 aa).

It belongs to the universal ribosomal protein uS8 family. As to quaternary structure, part of the 30S ribosomal subunit. Contacts proteins S5 and S12.

Its function is as follows. One of the primary rRNA binding proteins, it binds directly to 16S rRNA central domain where it helps coordinate assembly of the platform of the 30S subunit. The polypeptide is Small ribosomal subunit protein uS8 (Granulibacter bethesdensis (strain ATCC BAA-1260 / CGDNIH1)).